The following is an 859-amino-acid chain: Homeobox-leucine zipper protein HOX32 (859 aa).

A disordered region spans residues 7–31 (AAVHGVGRQDRSSPGGGGAPQVDTG). The segment at residues 29–92 (DTGKYVRYTP…NRRCREKQRK (64 aa)) is a DNA-binding region (homeobox). Positions 100-129 (VNRKLTAMNKLLMEENDRLQKQVSRLVYEN) form a coiled coil. Residues 146-164 (TSCESVVTSGQHHQQQNPA) show a composition bias toward polar residues. Residues 146-172 (TSCESVVTSGQHHQQQNPAATRPQRDA) form a disordered region. One can recognise an START domain in the interval 171 to 393 (DANNPAGLLA…LRHIRQIAHE (223 aa)).

It belongs to the HD-ZIP homeobox family. Class III subfamily. As to expression, expressed in seedlings, roots, stems, leaf sheaths and blades and panicles.

The protein resides in the nucleus. Functionally, probable transcription factor. The chain is Homeobox-leucine zipper protein HOX32 (HOX32) from Oryza sativa subsp. indica (Rice).